The following is a 554-amino-acid chain: 7-epi-sesquithujene synthase (554 aa).

Mg(2+) is bound by residues Asp-308 and Asp-312. Residues Asp-308, Asp-312, Arg-449, and Asn-452 each coordinate substrate. A DDXXD motif motif is present at residues 308-312; the sequence is DDMFD. Positions 452, 456, and 460 each coordinate Mg(2+).

Belongs to the terpene synthase family. As to quaternary structure, monomer. The cofactor is Mg(2+). Mn(2+) serves as cofactor. As to expression, highly expressed in the husk. Detected in leaf sheaths and leaves.

Its subcellular location is the cytoplasm. It catalyses the reaction (2E,6E)-farnesyl diphosphate = 7-epi-sesquithujene + diphosphate. It carries out the reaction (2E,6E)-farnesyl diphosphate = (1S,5S,6R)-alpha-bergamotene + diphosphate. The enzyme catalyses (2E,6E)-farnesyl diphosphate = (E)-beta-farnesene + diphosphate. The catalysed reaction is (2E,6E)-farnesyl diphosphate = (S)-beta-bisabolene + diphosphate. It catalyses the reaction (2Z,6E)-farnesyl diphosphate = (-)-beta-curcumene + diphosphate. It carries out the reaction (2E,6E)-farnesyl diphosphate = gamma-curcumene + diphosphate. The enzyme catalyses (2E,6E)-farnesyl diphosphate = sesquisabinene A + diphosphate. Its pathway is secondary metabolite biosynthesis; terpenoid biosynthesis. Its function is as follows. Sesquiterpene synthase involved in the production after herbivore attack of a blend of volatiles that attracts natural enemies of herbivores. Converts farnesyl diphosphate to (S)-beta-bisabolene and 7-epi-sesquithujene, along with a mixture of more than 20 other minor sesquiterpene olefins. Can also act in vitro as a monoterpene synthase, converting geranyl diphosphate to (S)-(-)-limonene, beta-myrcene and 11 other monoterpenes. This Zea mays (Maize) protein is 7-epi-sesquithujene synthase.